The sequence spans 311 residues: Catechol 1,2-dioxygenase (311 aa).

Tyrosine 164 provides a ligand contact to catechol. 4 residues coordinate Fe cation: tyrosine 164, tyrosine 200, histidine 224, and histidine 226. 224-226 (HIH) is a binding site for catechol.

This sequence belongs to the intradiol ring-cleavage dioxygenase family. Homodimer. Fe(3+) serves as cofactor.

The catalysed reaction is catechol + O2 = cis,cis-muconate + 2 H(+). It participates in aromatic compound metabolism; beta-ketoadipate pathway; 5-oxo-4,5-dihydro-2-furylacetate from catechol: step 1/3. The sequence is that of Catechol 1,2-dioxygenase from Acinetobacter baylyi (strain ATCC 33305 / BD413 / ADP1).